The following is a 121-amino-acid chain: Large ribosomal subunit protein uL14 (121 aa).

Belongs to the universal ribosomal protein uL14 family. Part of the 50S ribosomal subunit. Forms a cluster with proteins L3 and L19. In the 70S ribosome, L14 and L19 interact and together make contacts with the 16S rRNA in bridges B5 and B8.

Its function is as follows. Binds to 23S rRNA. Forms part of two intersubunit bridges in the 70S ribosome. The sequence is that of Large ribosomal subunit protein uL14 from Prochlorococcus marinus (strain SARG / CCMP1375 / SS120).